Reading from the N-terminus, the 214-residue chain is Ornithine decarboxylase antizyme 1 (214 aa).

It belongs to the ODC antizyme family. As to quaternary structure, interacts with ODC1 and thereby sterically blocks ODC homodimerization.

Its function is as follows. Ornithine decarboxylase (ODC) antizyme protein that negatively regulates ODC activity and intracellular polyamine biosynthesis and uptake in response to increased intracellular polyamine levels. Binds to ODC monomers, inhibiting the assembly of the functional ODC homodimer, and targets the monomers for ubiquitin-independent proteolytic destruction by the 26S proteasome. In Danio rerio (Zebrafish), this protein is Ornithine decarboxylase antizyme 1 (oaz1a).